The chain runs to 180 residues: Shikimate kinase (180 aa).

Residue 14 to 19 (GAGKTC) participates in ATP binding. Thr-18 contributes to the Mg(2+) binding site. The substrate site is built by Asp-36, Arg-60, and Gly-82. Arg-120 is an ATP binding site. Arg-139 provides a ligand contact to substrate.

This sequence belongs to the shikimate kinase family. In terms of assembly, monomer. The cofactor is Mg(2+).

Its subcellular location is the cytoplasm. It catalyses the reaction shikimate + ATP = 3-phosphoshikimate + ADP + H(+). Its pathway is metabolic intermediate biosynthesis; chorismate biosynthesis; chorismate from D-erythrose 4-phosphate and phosphoenolpyruvate: step 5/7. Its function is as follows. Catalyzes the specific phosphorylation of the 3-hydroxyl group of shikimic acid using ATP as a cosubstrate. The sequence is that of Shikimate kinase from Stenotrophomonas maltophilia (strain R551-3).